The primary structure comprises 309 residues: Protein FdhE (309 aa).

It belongs to the FdhE family.

The protein localises to the cytoplasm. In terms of biological role, necessary for formate dehydrogenase activity. The polypeptide is Protein FdhE (Salmonella dublin (strain CT_02021853)).